Here is a 30-residue protein sequence, read N- to C-terminus: Trypsin inhibitor 4 (30 aa).

3 disulfide bridges follow: Cys-3/Cys-20, Cys-10/Cys-22, and Cys-16/Cys-29.

It belongs to the protease inhibitor I7 (squash-type serine protease inhibitor) family.

It is found in the secreted. Functionally, inhibits trypsin. This chain is Trypsin inhibitor 4, found in Cucumis sativus (Cucumber).